A 799-amino-acid chain; its full sequence is 1,4-alpha-glucan-branching enzyme 2, chloroplastic/amyloplastic (799 aa).

The N-terminal 57 residues, 1 to 57 (MAFRVSGAVLGGAVRAPRLTGGGEGSLVFRHTGLFLTRGARVGCSGTHGAMRAAAAA), are a transit peptide targeting the chloroplast. Residues Trp-196 and Lys-232 each coordinate (1,4-alpha-D-glucosyl)n. Asp-447 (nucleophile) is an active-site residue. Glu-502 acts as the Proton donor in catalysis.

Belongs to the glycosyl hydrolase 13 family. GlgB subfamily. In terms of assembly, monomer.

The protein resides in the plastid. It is found in the chloroplast. Its subcellular location is the amyloplast. It catalyses the reaction Transfers a segment of a (1-&gt;4)-alpha-D-glucan chain to a primary hydroxy group in a similar glucan chain.. Its pathway is glycan biosynthesis; starch biosynthesis. In terms of biological role, catalyzes the formation of the alpha-1,6-glucosidic linkages in starch by scission of a 1,4-alpha-linked oligosaccharide from growing alpha-1,4-glucan chains and the subsequent attachment of the oligosaccharide to the alpha-1,6 position. The chain is 1,4-alpha-glucan-branching enzyme 2, chloroplastic/amyloplastic (SBE1) from Zea mays (Maize).